A 375-amino-acid polypeptide reads, in one-letter code: Queuine tRNA-ribosyltransferase (375 aa).

The active-site Proton acceptor is the Asp89. Substrate contacts are provided by residues 89-93 (DSGGF), Asp143, Gln187, and Gly214. Positions 245 to 251 (GVGKPED) are RNA binding. The Nucleophile role is filled by Asp264. An RNA binding; important for wobble base 34 recognition region spans residues 269 to 273 (TRNAR). Cys302, Cys304, Cys307, and His333 together coordinate Zn(2+).

It belongs to the queuine tRNA-ribosyltransferase family. In terms of assembly, homodimer. Within each dimer, one monomer is responsible for RNA recognition and catalysis, while the other monomer binds to the replacement base PreQ1. It depends on Zn(2+) as a cofactor.

The catalysed reaction is 7-aminomethyl-7-carbaguanine + guanosine(34) in tRNA = 7-aminomethyl-7-carbaguanosine(34) in tRNA + guanine. It functions in the pathway tRNA modification; tRNA-queuosine biosynthesis. Catalyzes the base-exchange of a guanine (G) residue with the queuine precursor 7-aminomethyl-7-deazaguanine (PreQ1) at position 34 (anticodon wobble position) in tRNAs with GU(N) anticodons (tRNA-Asp, -Asn, -His and -Tyr). Catalysis occurs through a double-displacement mechanism. The nucleophile active site attacks the C1' of nucleotide 34 to detach the guanine base from the RNA, forming a covalent enzyme-RNA intermediate. The proton acceptor active site deprotonates the incoming PreQ1, allowing a nucleophilic attack on the C1' of the ribose to form the product. After dissociation, two additional enzymatic reactions on the tRNA convert PreQ1 to queuine (Q), resulting in the hypermodified nucleoside queuosine (7-(((4,5-cis-dihydroxy-2-cyclopenten-1-yl)amino)methyl)-7-deazaguanosine). The sequence is that of Queuine tRNA-ribosyltransferase from Salmonella agona (strain SL483).